We begin with the raw amino-acid sequence, 295 residues long: Nucleotide-binding protein SSU98_0619 (295 aa).

12-19 (GMSGAGKT) serves as a coordination point for ATP. 62–65 (DMRS) serves as a coordination point for GTP.

The protein belongs to the RapZ-like family.

Functionally, displays ATPase and GTPase activities. The sequence is that of Nucleotide-binding protein SSU98_0619 from Streptococcus suis (strain 98HAH33).